The chain runs to 63 residues: Large ribosomal subunit protein bL28 (63 aa).

The protein belongs to the bacterial ribosomal protein bL28 family.

In Clostridium beijerinckii (strain ATCC 51743 / NCIMB 8052) (Clostridium acetobutylicum), this protein is Large ribosomal subunit protein bL28.